Reading from the N-terminus, the 767-residue chain is 5-methyltetrahydropteroyltriglutamate--homocysteine methyltransferase (767 aa).

5-methyltetrahydropteroyltri-L-glutamate-binding positions include 17–20 (RELK) and K117. Residues 442-444 (IGS) and E495 contribute to the L-homocysteine site. Residues 442 to 444 (IGS) and E495 each bind L-methionine. Residues 526 to 527 (RC) and W572 contribute to the 5-methyltetrahydropteroyltri-L-glutamate site. D610 is a binding site for L-homocysteine. Position 610 (D610) interacts with L-methionine. 5-methyltetrahydropteroyltri-L-glutamate is bound at residue E616. Residues H653, C655, and E677 each contribute to the Zn(2+) site. The active-site Proton donor is H706. C738 contacts Zn(2+).

Belongs to the vitamin-B12 independent methionine synthase family. Zn(2+) is required as a cofactor.

The enzyme catalyses 5-methyltetrahydropteroyltri-L-glutamate + L-homocysteine = tetrahydropteroyltri-L-glutamate + L-methionine. The protein operates within amino-acid biosynthesis; L-methionine biosynthesis via de novo pathway; L-methionine from L-homocysteine (MetE route): step 1/1. Functionally, catalyzes the transfer of a methyl group from 5-methyltetrahydrofolate to homocysteine resulting in methionine formation. The sequence is that of 5-methyltetrahydropteroyltriglutamate--homocysteine methyltransferase from Bifidobacterium animalis subsp. lactis (strain AD011).